We begin with the raw amino-acid sequence, 247 residues long: Carboxy-S-adenosyl-L-methionine synthase (247 aa).

Residues Y40, 65–67 (GAS), 90–91 (DN), 122–123 (DI), N137, and R204 contribute to the S-adenosyl-L-methionine site.

It belongs to the class I-like SAM-binding methyltransferase superfamily. Cx-SAM synthase family. Homodimer.

It catalyses the reaction prephenate + S-adenosyl-L-methionine = carboxy-S-adenosyl-L-methionine + 3-phenylpyruvate + H2O. Functionally, catalyzes the conversion of S-adenosyl-L-methionine (SAM) to carboxy-S-adenosyl-L-methionine (Cx-SAM). In Pseudomonas putida (strain ATCC 47054 / DSM 6125 / CFBP 8728 / NCIMB 11950 / KT2440), this protein is Carboxy-S-adenosyl-L-methionine synthase.